The chain runs to 788 residues: Leucine-rich repeat and fibronectin type-III domain-containing protein 2 (788 aa).

The signal sequence occupies residues 1–20 (METLLGGLLAFGMAFAVVDA). The LRRNT domain occupies 21–52 (CPKYCVCQNLSESLGTLCPSKGLLFVPPDIDR). Over 21 to 534 (CPKYCVCQNL…MHSQILGGTM (514 aa)) the chain is Extracellular. An N-linked (GlcNAc...) asparagine glycan is attached at asparagine 29. LRR repeat units follow at residues 53-74 (RTVE…DFAN), 77-98 (GLVD…SFLD), 101-122 (SLRS…TLRG), 125-146 (NLQH…AFED), 150-171 (TLED…SVRR), 174-195 (NLHQ…TFAD), and 198-219 (KLAR…PIFA). In terms of domain architecture, LRRCT spans 242–288 (NPLHCNCELLWLRRLERDDDLETCGSPGSLKGRYFWHIREEEFVCEP). Positions 289–375 (PLITQHTHKL…GEATATVEVS (87 aa)) constitute an Ig-like domain. Cysteines 310 and 359 form a disulfide. N-linked (GlcNAc...) asparagine glycosylation is found at asparagine 332, asparagine 341, and asparagine 384. The tract at residues 383–423 (SNSTSRMAPPKSRLSDITGSSKTSRGGGGSGAGEPPKSTPE) is disordered. Residues 422-518 (PERAVLVSDV…GCAQFFTKAD (97 aa)) enclose the Fibronectin type-III domain. Residues 535-555 (ILVIGGIIVATLLVFIVILMV) form a helical membrane-spanning segment. The Cytoplasmic segment spans residues 556–788 (RYKVCNHDTP…SSEWVMESTV (233 aa)). The span at 620-631 (CDSSSSSSLGSG) shows a compositional bias: low complexity. 2 disordered regions span residues 620–655 (CDSS…PSLD) and 668–711 (SQRK…RSLL). Pro residues predominate over residues 642–651 (RLPPPAPRPK). The PDZ-binding signature appears at 785 to 788 (ESTV).

It belongs to the LRFN family. Forms heteromeric complexes with LRFN1, LRFN3, LRFN4 and LRFN5. Can form homomeric complexes, but not across cell junctions. Interacts with DLG4. Directly interacts with DLG1, DLG2 and DLG3. Directly interacts with 2 NMDA receptor subunits GRIN1 and GRIN2A. Glycosylated. In terms of tissue distribution, predominantly expressed in the brain, with a weak, but broad expression in the cerebral cortex and diencephalic nuclei. Strongly expressed in both the pyramidal layer and the dentate gyrus of the hippocampus. Also detected in other parts of the central nervous system, including the olfactory bulb, pons, cerebellum, and medulla oblongata, as well as in the peripheral nervous system, such as the ganglia of cranial nerves and the dorsal root ganglion during gestation.

The protein localises to the membrane. The protein resides in the synapse. Its subcellular location is the postsynaptic cell membrane. In terms of biological role, promotes neurite outgrowth in hippocampal neurons. Enhances the cell surface expression of 2 NMDA receptor subunits GRIN1 and GRIN2A. May play a role in redistributing DLG4 to the cell periphery. The sequence is that of Leucine-rich repeat and fibronectin type-III domain-containing protein 2 (Lrfn2) from Mus musculus (Mouse).